The sequence spans 376 residues: uncharacterized protein (376 aa).

One can recognise a Peptidase M14 domain in the interval 82–372 (KIYDDSAVEK…ATSGILWRAL (291 aa)). The Zn(2+) site is built by His-138, Glu-141, and His-283. The Proton donor/acceptor role is filled by Glu-344.

It belongs to the peptidase M14 family. Zn(2+) serves as cofactor.

This is an uncharacterized protein from Bacillus subtilis (strain 168).